A 115-amino-acid chain; its full sequence is Nucleoid-associated protein Ccel_0243 (115 aa).

This sequence belongs to the YbaB/EbfC family. As to quaternary structure, homodimer.

It localises to the cytoplasm. The protein resides in the nucleoid. Its function is as follows. Binds to DNA and alters its conformation. May be involved in regulation of gene expression, nucleoid organization and DNA protection. The chain is Nucleoid-associated protein Ccel_0243 from Ruminiclostridium cellulolyticum (strain ATCC 35319 / DSM 5812 / JCM 6584 / H10) (Clostridium cellulolyticum).